The primary structure comprises 409 residues: Tetracenomycin polyketide synthase ketoacyl synthase beta subunit (409 aa).

In terms of domain architecture, Ketosynthase family 3 (KS3) spans 4–407 (PAPVVVTGLG…GFNSALVVRR (404 aa)).

It belongs to the thiolase-like superfamily. Beta-ketoacyl-ACP synthases family. As to quaternary structure, the tetracenomycin polyketide synthase (TCM PKS) is composed of a ketosynthase complex (TcmKL), an acyl carrier protein (TcmM), a cyclase (TcmN) and a probable second cyclase (TcmJ). TcmK and TcmL form a heterodimeric complex.

It carries out the reaction 10 malonyl-CoA + 8 H(+) = tetracenomycin F2 + 10 CO2 + 10 CoA + 2 H2O. Its pathway is antibiotic biosynthesis; tetracenomycin C biosynthesis. Its function is as follows. Involved in the biosynthesis of tetracenomycin C (TCM C). Part of a type II polyketide synthase (PKS) that catalyzes the synthesis of tetracenomycin F2 (TCM F2), a precursor of TCM C, from malonyl-CoA. TcmK and TcmL form a heterodimeric alpha-beta complex that catalyzes the condensation reactions between the growing acyl-enzyme chain and the malonyl-CoA extender units. This Streptomyces glaucescens protein is Tetracenomycin polyketide synthase ketoacyl synthase beta subunit.